We begin with the raw amino-acid sequence, 223 residues long: Ribosomal RNA small subunit methyltransferase G (223 aa).

S-adenosyl-L-methionine contacts are provided by Gly85, Phe90, and Arg154.

This sequence belongs to the methyltransferase superfamily. RNA methyltransferase RsmG family.

It localises to the cytoplasm. It carries out the reaction guanosine(527) in 16S rRNA + S-adenosyl-L-methionine = N(7)-methylguanosine(527) in 16S rRNA + S-adenosyl-L-homocysteine. Functionally, specifically methylates the N7 position of guanine in position 527 of 16S rRNA. This chain is Ribosomal RNA small subunit methyltransferase G, found in Rhodopseudomonas palustris (strain ATCC BAA-98 / CGA009).